A 99-amino-acid polypeptide reads, in one-letter code: MPEISRDQVAHLAKLSRLALTEEELEQFAGQIDDIVGYVSAVQNVDAAGVEPMSHPHSIATTMREDVVHKTLDAAAALDQAPAVEDGRFMVPQILGEGD.

Belongs to the GatC family. Heterotrimer of A, B and C subunits.

The enzyme catalyses L-glutamyl-tRNA(Gln) + L-glutamine + ATP + H2O = L-glutaminyl-tRNA(Gln) + L-glutamate + ADP + phosphate + H(+). It catalyses the reaction L-aspartyl-tRNA(Asn) + L-glutamine + ATP + H2O = L-asparaginyl-tRNA(Asn) + L-glutamate + ADP + phosphate + 2 H(+). Functionally, allows the formation of correctly charged Asn-tRNA(Asn) or Gln-tRNA(Gln) through the transamidation of misacylated Asp-tRNA(Asn) or Glu-tRNA(Gln) in organisms which lack either or both of asparaginyl-tRNA or glutaminyl-tRNA synthetases. The reaction takes place in the presence of glutamine and ATP through an activated phospho-Asp-tRNA(Asn) or phospho-Glu-tRNA(Gln). This is Aspartyl/glutamyl-tRNA(Asn/Gln) amidotransferase subunit C from Corynebacterium glutamicum (strain R).